We begin with the raw amino-acid sequence, 343 residues long: Aspartate carbamoyltransferase catalytic subunit (343 aa).

The carbamoyl phosphate site is built by R91 and T92. K119 provides a ligand contact to L-aspartate. Residues R141, H171, and Q174 each contribute to the carbamoyl phosphate site. L-aspartate contacts are provided by R204 and R259. Carbamoyl phosphate is bound by residues G300 and P301.

The protein belongs to the aspartate/ornithine carbamoyltransferase superfamily. ATCase family. Heterododecamer (2C3:3R2) of six catalytic PyrB chains organized as two trimers (C3), and six regulatory PyrI chains organized as three dimers (R2).

The enzyme catalyses carbamoyl phosphate + L-aspartate = N-carbamoyl-L-aspartate + phosphate + H(+). It functions in the pathway pyrimidine metabolism; UMP biosynthesis via de novo pathway; (S)-dihydroorotate from bicarbonate: step 2/3. Catalyzes the condensation of carbamoyl phosphate and aspartate to form carbamoyl aspartate and inorganic phosphate, the committed step in the de novo pyrimidine nucleotide biosynthesis pathway. The protein is Aspartate carbamoyltransferase catalytic subunit of Burkholderia orbicola (strain MC0-3).